A 534-amino-acid polypeptide reads, in one-letter code: Beta-glucosidase 32 (534 aa).

The first 22 residues, 1–22 (MAIKLIALVITICVASWDSAQG), serve as a signal peptide directing secretion. A beta-D-glucoside is bound at residue Gln51. Residue Asn68 is glycosylated (N-linked (GlcNAc...) asparagine). Residues His154 and 199-200 (NE) contribute to the a beta-D-glucoside site. Glu200 (proton donor) is an active-site residue. Residues Cys219 and Cys227 are joined by a disulfide bond. An a beta-D-glucoside-binding site is contributed by Tyr344. Asn374 carries N-linked (GlcNAc...) asparagine glycosylation. Glu417 lines the a beta-D-glucoside pocket. Glu417 acts as the Nucleophile in catalysis. An N-linked (GlcNAc...) asparagine glycan is attached at Asn425. Residues Trp467, 474-475 (EW), and Phe483 each bind a beta-D-glucoside.

This sequence belongs to the glycosyl hydrolase 1 family.

The catalysed reaction is Hydrolysis of terminal, non-reducing beta-D-glucosyl residues with release of beta-D-glucose.. The polypeptide is Beta-glucosidase 32 (Arabidopsis thaliana (Mouse-ear cress)).